A 356-amino-acid chain; its full sequence is NADH-quinone oxidoreductase subunit H (356 aa).

The next 8 membrane-spanning stretches (helical) occupy residues 18–38, 87–107, 120–140, 166–186, 202–222, 257–277, 292–312, and 333–353; these read IVMVAQSVLLLVVLLIAIAYI, GVFLLAPLVSCVLALAAWAVI, VGILYIFAISSLSIYGIIMGG, IGFVIITVLLCAGSLNLSAIV, WLTFLNWYWLPLLPMFVVFYV, LFMLGEYVAITTMCAMGAILF, WVPGVIWFSLKLFFMFFLIAM, and FLPLSLAMVVIVAAVLQFAGI.

The protein belongs to the complex I subunit 1 family. As to quaternary structure, NDH-1 is composed of 14 different subunits. Subunits NuoA, H, J, K, L, M, N constitute the membrane sector of the complex.

The protein localises to the cell inner membrane. The catalysed reaction is a quinone + NADH + 5 H(+)(in) = a quinol + NAD(+) + 4 H(+)(out). In terms of biological role, NDH-1 shuttles electrons from NADH, via FMN and iron-sulfur (Fe-S) centers, to quinones in the respiratory chain. The immediate electron acceptor for the enzyme in this species is believed to be ubiquinone. Couples the redox reaction to proton translocation (for every two electrons transferred, four hydrogen ions are translocated across the cytoplasmic membrane), and thus conserves the redox energy in a proton gradient. This subunit may bind ubiquinone. The chain is NADH-quinone oxidoreductase subunit H from Nitrobacter winogradskyi (strain ATCC 25391 / DSM 10237 / CIP 104748 / NCIMB 11846 / Nb-255).